We begin with the raw amino-acid sequence, 355 residues long: 3-isopropylmalate dehydrogenase (355 aa).

Residues Arg-90, Arg-100, Arg-128, and Asp-222 each coordinate substrate. Residues Asp-222, Asp-246, and Asp-250 each contribute to the Mg(2+) site. An NAD(+)-binding site is contributed by 280–292 (GSAPDIAGKGVAN).

This sequence belongs to the isocitrate and isopropylmalate dehydrogenases family. LeuB type 1 subfamily. Homodimer. Requires Mg(2+) as cofactor. Mn(2+) is required as a cofactor.

The protein localises to the cytoplasm. It carries out the reaction (2R,3S)-3-isopropylmalate + NAD(+) = 4-methyl-2-oxopentanoate + CO2 + NADH. The protein operates within amino-acid biosynthesis; L-leucine biosynthesis; L-leucine from 3-methyl-2-oxobutanoate: step 3/4. Its function is as follows. Catalyzes the oxidation of 3-carboxy-2-hydroxy-4-methylpentanoate (3-isopropylmalate) to 3-carboxy-4-methyl-2-oxopentanoate. The product decarboxylates to 4-methyl-2 oxopentanoate. The polypeptide is 3-isopropylmalate dehydrogenase (Cupriavidus pinatubonensis (strain JMP 134 / LMG 1197) (Cupriavidus necator (strain JMP 134))).